Consider the following 348-residue polypeptide: Ribonuclease H (348 aa).

Over residues 54 to 65 (NTTSNYGSSTHA) the composition is skewed to polar residues. The segment at 54 to 81 (NTTSNYGSSTHAGGQVSKPHTTQKRVHR) is disordered. The RNase H type-1 domain maps to 184-346 (YNKSMNVYCD…ADFLAKKGAS (163 aa)). Positions 193, 235, 264, and 338 each coordinate Mg(2+).

It belongs to the RNase H family. The cofactor is Mg(2+).

It catalyses the reaction Endonucleolytic cleavage to 5'-phosphomonoester.. Its function is as follows. Endonuclease that specifically degrades the RNA of RNA-DNA hybrids. The chain is Ribonuclease H (RNH1) from Saccharomyces cerevisiae (strain ATCC 204508 / S288c) (Baker's yeast).